We begin with the raw amino-acid sequence, 199 residues long: Holliday junction resolvase RecU (199 aa).

Positions 82, 84, 97, and 116 each coordinate Mg(2+).

It belongs to the RecU family. Mg(2+) serves as cofactor.

Its subcellular location is the cytoplasm. The catalysed reaction is Endonucleolytic cleavage at a junction such as a reciprocal single-stranded crossover between two homologous DNA duplexes (Holliday junction).. Its function is as follows. Endonuclease that resolves Holliday junction intermediates in genetic recombination. Cleaves mobile four-strand junctions by introducing symmetrical nicks in paired strands. Promotes annealing of linear ssDNA with homologous dsDNA. Required for DNA repair, homologous recombination and chromosome segregation. This is Holliday junction resolvase RecU from Streptococcus agalactiae serotype Ia (strain ATCC 27591 / A909 / CDC SS700).